Here is a 538-residue protein sequence, read N- to C-terminus: DALR anticodon-binding domain-containing protein 3 (538 aa).

As to quaternary structure, part of a complex containing tRNA(Arg) and METTL2. Interacts with tRNA(Arg)(CCU) and tRNA(Arg)(UCU). Interacts with METTL2.

In terms of biological role, involved in tRNA methylation. Facilitates the recognition and targeting of tRNA(Arg)(CCU) and tRNA(Arg)(UCU) substrates for N(3)-methylcytidine modification by METTL2. The polypeptide is DALR anticodon-binding domain-containing protein 3 (Dalrd3) (Mus musculus (Mouse)).